Consider the following 975-residue polypeptide: Glycine dehydrogenase (decarboxylating) (975 aa).

Lys723 carries the N6-(pyridoxal phosphate)lysine modification.

The protein belongs to the GcvP family. As to quaternary structure, the glycine cleavage system is composed of four proteins: P, T, L and H. Requires pyridoxal 5'-phosphate as cofactor.

The catalysed reaction is N(6)-[(R)-lipoyl]-L-lysyl-[glycine-cleavage complex H protein] + glycine + H(+) = N(6)-[(R)-S(8)-aminomethyldihydrolipoyl]-L-lysyl-[glycine-cleavage complex H protein] + CO2. The glycine cleavage system catalyzes the degradation of glycine. The P protein binds the alpha-amino group of glycine through its pyridoxal phosphate cofactor; CO(2) is released and the remaining methylamine moiety is then transferred to the lipoamide cofactor of the H protein. In Burkholderia cenocepacia (strain HI2424), this protein is Glycine dehydrogenase (decarboxylating).